A 547-amino-acid chain; its full sequence is MGNSNELICIGLEGTAEKTGVGVITSNGEVLFNKTVIYTPKIQGIHPREAADHHAETFIKLLNEVSGVIPLDKIDLVSFSQGPGLGPSLRVTATTGRALALSLKKPIIGVNHCVSHVEIGKLKTDALDPLTLYVSGGNTQVLAYTGKKYRVIGETLDIAIGNCLDQFARYCNLSHPGGVFVEQYAKEGKKFLKLPYTVKGMDISFSGLLTASMKKYDSNEKIEDVCYSLQETAFSMLTEITERALSHTNKPEIMLVGGVAANDRLKEMLEIMCNEQNVDFYVPEKQFCGDNGAMIAWLGILQYINGKRMDILDTKTIPHFRTDMVDVNWVVKSTENELDILNKKRQIPRHLIGKGAEADILKGRYLEWESITKERIKKGYRTAELDEMIRTRRTVKEARFLSIIKDFSVNSPHIFDIDIENKKITMEYIHGKLLKDLIEEGNLEFCKSIGELIGKMHEGKIIHNDLTTSNFIVNTDAYMIDFGLGKYSDLIEDKAIDLIVLKKSIMSIHYDKFGEIWDKIIEGYSKYGHSELVLQYIKEVEKRGRYL.

Positions 1-329 (MGNSNELICI…FRTDMVDVNW (329 aa)) are kae1. The Fe cation site is built by H112, H116, and Y133. L-threonylcarbamoyladenylate is bound by residues 133 to 137 (YVSGG), D165, G178, E182, and N262. Fe cation is bound at residue D290. Residues 346–547 (QIPRHLIGKG…KEVEKRGRYL (202 aa)) enclose the Protein kinase domain. Residues 352-360 (IGKGAEADI) and K373 each bind ATP. The active-site Proton acceptor; for kinase activity is D465.

It in the N-terminal section; belongs to the KAE1 / TsaD family. This sequence in the C-terminal section; belongs to the protein kinase superfamily. Tyr protein kinase family. BUD32 subfamily. Component of the KEOPS complex that consists of Kae1, Bud32, Cgi121 and Pcc1; the whole complex dimerizes. Fe(2+) serves as cofactor.

The protein resides in the cytoplasm. The catalysed reaction is L-seryl-[protein] + ATP = O-phospho-L-seryl-[protein] + ADP + H(+). It catalyses the reaction L-threonyl-[protein] + ATP = O-phospho-L-threonyl-[protein] + ADP + H(+). The enzyme catalyses L-threonylcarbamoyladenylate + adenosine(37) in tRNA = N(6)-L-threonylcarbamoyladenosine(37) in tRNA + AMP + H(+). Its function is as follows. Required for the formation of a threonylcarbamoyl group on adenosine at position 37 (t(6)A37) in tRNAs that read codons beginning with adenine. Is a component of the KEOPS complex that is probably involved in the transfer of the threonylcarbamoyl moiety of threonylcarbamoyl-AMP (TC-AMP) to the N6 group of A37. The Kae1 domain likely plays a direct catalytic role in this reaction. The Bud32 domain probably displays kinase activity that regulates Kae1 function. The sequence is that of Probable bifunctional tRNA threonylcarbamoyladenosine biosynthesis protein from Methanococcus vannielii (strain ATCC 35089 / DSM 1224 / JCM 13029 / OCM 148 / SB).